Consider the following 551-residue polypeptide: Colicin-E6 (551 aa).

Disordered regions lie at residues 1 to 74 (MSGG…SGGG), 244 to 269 (LSPGVTNNTDKDVRPAGFTQGGNTRD), 293 to 317 (PDQVKQRQDEENRRQQEWDATHPVE), 406 to 501 (NKQA…WYGD), and 517 to 551 (EGYRASDGQHLGSFEPKTGNQLKGPDPKRNIKKYL). Residues 20 to 35 (INGGPTGLGVGGGASD) show a composition bias toward gly residues. Positions 36-45 (GSGWSSENNP) are enriched in low complexity. Over residues 46–74 (WGGGSGSGIHWGGGSGHGNGGGNGNSGGG) the composition is skewed to gly residues. Basic and acidic residues-rich tracts occupy residues 296–317 (VKQRQDEENRRQQEWDATHPVE) and 430–484 (ESRK…EGKP). The segment at 455–551 (KGVKDYGHDY…DPKRNIKKYL (97 aa)) is ribosome inactivating activity. Residues 530–551 (FEPKTGNQLKGPDPKRNIKKYL) form a binding of immunity protein region.

It belongs to the cloacin colicin family.

Functionally, inactivates ribosomes by hydrolyzing 16S RNA in 30S ribosomes at a specific site. Its function is as follows. Colicins are polypeptide toxins produced by and active against E.coli and closely related bacteria. This is Colicin-E6 from Escherichia coli.